A 375-amino-acid chain; its full sequence is Histidine biosynthesis bifunctional protein HisB (375 aa).

The histidinol-phosphatase stretch occupies residues 1 to 168; that stretch reads MTPILFVDRD…GIAHELADAP (168 aa). The active-site Nucleophile is the Asp8. Asp8, Asp10, and Asp128 together coordinate Mg(2+). Asp10 functions as the Proton donor in the catalytic mechanism. The segment at 169-375 is imidazoleglycerol-phosphate dehydratase; that stretch reads RRAVVQRNTK…SALPTTKGAL (207 aa).

This sequence in the N-terminal section; belongs to the histidinol-phosphatase family. It in the C-terminal section; belongs to the imidazoleglycerol-phosphate dehydratase family. It depends on Mg(2+) as a cofactor.

The protein localises to the cytoplasm. It catalyses the reaction D-erythro-1-(imidazol-4-yl)glycerol 3-phosphate = 3-(imidazol-4-yl)-2-oxopropyl phosphate + H2O. It carries out the reaction L-histidinol phosphate + H2O = L-histidinol + phosphate. Its pathway is amino-acid biosynthesis; L-histidine biosynthesis; L-histidine from 5-phospho-alpha-D-ribose 1-diphosphate: step 6/9. The protein operates within amino-acid biosynthesis; L-histidine biosynthesis; L-histidine from 5-phospho-alpha-D-ribose 1-diphosphate: step 8/9. The protein is Histidine biosynthesis bifunctional protein HisB of Xanthomonas oryzae pv. oryzae (strain MAFF 311018).